The sequence spans 218 residues: uncharacterized protein (218 aa).

7 residues coordinate Zn(2+): His57, His59, Asp61, His62, His138, Asp158, and His199.

The protein belongs to the metallo-beta-lactamase superfamily. Glyoxalase II family. Zn(2+) is required as a cofactor.

This is an uncharacterized protein from Mycobacterium leprae (strain TN).